The primary structure comprises 164 residues: Protein-export protein SecB (164 aa).

It belongs to the SecB family. As to quaternary structure, homotetramer, a dimer of dimers. One homotetramer interacts with 1 SecA dimer.

It localises to the cytoplasm. Functionally, one of the proteins required for the normal export of preproteins out of the cell cytoplasm. It is a molecular chaperone that binds to a subset of precursor proteins, maintaining them in a translocation-competent state. It also specifically binds to its receptor SecA. In Zymomonas mobilis subsp. mobilis (strain ATCC 31821 / ZM4 / CP4), this protein is Protein-export protein SecB.